The sequence spans 182 residues: Ribulose bisphosphate carboxylase small subunit, chloroplastic (182 aa).

The transit peptide at 1–58 (MASSMLSTATVASINRVSPAQATMVAPFTGLKSTPVFPTTRKTNSDITSITSNGGKVQ) directs the protein to the chloroplast.

It belongs to the RuBisCO small chain family. Heterohexadecamer of 8 large and 8 small subunits.

Its subcellular location is the plastid. The protein resides in the chloroplast. Functionally, ruBisCO catalyzes two reactions: the carboxylation of D-ribulose 1,5-bisphosphate, the primary event in carbon dioxide fixation, as well as the oxidative fragmentation of the pentose substrate. Both reactions occur simultaneously and in competition at the same active site. Although the small subunit is not catalytic it is essential for maximal activity. The polypeptide is Ribulose bisphosphate carboxylase small subunit, chloroplastic (Manihot esculenta (Cassava)).